Consider the following 278-residue polypeptide: HTH-type transcriptional activator RhaS (278 aa).

One can recognise an HTH araC/xylS-type domain in the interval 174–272; sequence NQLMAWLEDH…NWSPRDIRQG (99 aa). 2 DNA-binding regions (H-T-H motif) span residues 191–212 and 239–262; these read EAVAEQFSLSLRTLHRQLKQHT and VTEIAYRCGFGDSNHFSTLFRREF.

Binds DNA as a dimer.

It is found in the cytoplasm. Activates expression of the rhaBAD and rhaT operons. The chain is HTH-type transcriptional activator RhaS from Salmonella heidelberg (strain SL476).